A 167-amino-acid chain; its full sequence is Claudin domain-containing protein 2 (167 aa).

4 helical membrane-spanning segments follow: residues 13 to 32, 61 to 81, 96 to 116, and 130 to 150; these read LLNLLSSILTVLSTTTNYWT, VSAACMVLAATFSIVALGIGI, TIVLLFLSGLLLLIALAVYTS, and YFFGWLALPFLFIAGFCFLLA.

It belongs to the PMP-22/EMP/MP20 family.

The protein localises to the membrane. The protein is Claudin domain-containing protein 2 (Cldnd2) of Mus musculus (Mouse).